The primary structure comprises 405 residues: Dynactin subunit 2 (405 aa).

Residues 1-25 (MADPKYADLPGIARNEPDVYETSDL) form a disordered region. A2 is modified (N-acetylalanine). Y6 is subject to Phosphotyrosine. The residue at position 85 (S85) is a Phosphoserine. Y88 carries the post-translational modification Phosphotyrosine. A coiled-coil region spans residues 105–132 (YQRLLHEVQELTTEVEKIKMTVKESATE). T136 carries the post-translational modification Phosphothreonine. The interval 187–207 (KNTKGAGSGGKTTSGSPPDSS) is disordered. S324 is modified (phosphoserine).

The protein belongs to the dynactin subunit 2 family. In terms of assembly, subunit of dynactin, a multiprotein complex part of a tripartite complex with dynein and a adapter, such as BICDL1, BICD2 or HOOK3. The dynactin complex is built around ACTR1A/ACTB filament and consists of an actin-related filament composed of a shoulder domain, a pointed end and a barbed end. Its length is defined by its flexible shoulder domain. The soulder is composed of 2 DCTN1 subunits, 4 DCTN2 and 2 DCTN3. The 4 DCNT2 (via N-terminus) bind the ACTR1A filament and act as molecular rulers to determine the length. The pointed end is important for binding dynein-dynactin cargo adapters and consists of 4 subunits: ACTR10, DCNT4, DCTN5 and DCTN6. The barbed end is composed of a CAPZA1:CAPZB heterodimers, which binds ACTR1A/ACTB filament and dynactin and stabilizes dynactin. Interacts with BICD2 and CEP135. Interacts with DYNAP. Interacts with ECPAS. Interacts with MAPRE1.

The protein resides in the cytoplasm. The protein localises to the cytoskeleton. Its subcellular location is the microtubule organizing center. It localises to the centrosome. It is found in the membrane. Its function is as follows. Part of the dynactin complex that activates the molecular motor dynein for ultra-processive transport along microtubules. In the dynactin soulder domain, binds the ACTR1A filament and acts as a molecular ruler to determine the length. Modulates cytoplasmic dynein binding to an organelle, and plays a role in prometaphase chromosome alignment and spindle organization during mitosis. Involved in anchoring microtubules to centrosomes. May play a role in synapse formation during brain development. The protein is Dynactin subunit 2 (DCTN2) of Sus scrofa (Pig).